A 442-amino-acid polypeptide reads, in one-letter code: ATP-dependent protease ATPase subunit HslU (442 aa).

Residues Ile18 and 60–65 (GVGKTE) each bind ATP. The tract at residues 136 to 157 (LPKPKNDWESTETDSSSNTRQV) is disordered. The ATP site is built by Asp255, Glu320, and Arg392.

The protein belongs to the ClpX chaperone family. HslU subfamily. A double ring-shaped homohexamer of HslV is capped on each side by a ring-shaped HslU homohexamer. The assembly of the HslU/HslV complex is dependent on binding of ATP.

The protein resides in the cytoplasm. Functionally, ATPase subunit of a proteasome-like degradation complex; this subunit has chaperone activity. The binding of ATP and its subsequent hydrolysis by HslU are essential for unfolding of protein substrates subsequently hydrolyzed by HslV. HslU recognizes the N-terminal part of its protein substrates and unfolds these before they are guided to HslV for hydrolysis. This chain is ATP-dependent protease ATPase subunit HslU, found in Shewanella baltica (strain OS185).